Here is a 132-residue protein sequence, read N- to C-terminus: Small ribosomal subunit protein uS8 (132 aa).

Belongs to the universal ribosomal protein uS8 family. As to quaternary structure, part of the 30S ribosomal subunit. Contacts proteins S5 and S12.

Functionally, one of the primary rRNA binding proteins, it binds directly to 16S rRNA central domain where it helps coordinate assembly of the platform of the 30S subunit. This is Small ribosomal subunit protein uS8 from Bartonella henselae (strain ATCC 49882 / DSM 28221 / CCUG 30454 / Houston 1) (Rochalimaea henselae).